Here is a 161-residue protein sequence, read N- to C-terminus: MHEISLSDVSSLVGQELGTSKWITIDQAMINLFADATHDHQFIHVDPNRAAAESPFGGAIAHGFLTLALLSVMNFSGMPKFREQTMGINYGFDRVRFISPVRTGSRVHGRFVLSDCRLRRASILMTAYNVTVEIENENKPALTANWIAIAQFNPKDRPKAG.

A MaoC-like domain is found at 10 to 130; it reads SSLVGQELGT…ASILMTAYNV (121 aa).

The protein to the R.leguminosarum biovar viciae counterpart.

Functionally, involved in the production of the root hair deformation (HAD) factor specifically on medicago. The polypeptide is Nodulation protein N (nodN) (Rhizobium meliloti (strain 1021) (Ensifer meliloti)).